The chain runs to 190 residues: MENLHKRILEEGQALSNDVLKVDSFLNHQVDADLMYEMGTYFKNYFKDHNITKIFTIESSGIAPTVMTAMQMNLPMVILKKQGSKILKGDVYQTTVHSFTKGTDYELTLQKKYINEDDNILIIDDFLANGEAALGAARLVEGAGAKVAGIGIVIEKSFQPGPKLLEEKGYDVYSLARIEKLEKGIIKIKK.

Residues Leu20 and Asn27 each contribute to the xanthine site. Ala128–Ala132 is a 5-phospho-alpha-D-ribose 1-diphosphate binding site. Xanthine is bound at residue Lys156.

It belongs to the purine/pyrimidine phosphoribosyltransferase family. Xpt subfamily. In terms of assembly, homodimer.

The protein resides in the cytoplasm. The catalysed reaction is XMP + diphosphate = xanthine + 5-phospho-alpha-D-ribose 1-diphosphate. It participates in purine metabolism; XMP biosynthesis via salvage pathway; XMP from xanthine: step 1/1. Its function is as follows. Converts the preformed base xanthine, a product of nucleic acid breakdown, to xanthosine 5'-monophosphate (XMP), so it can be reused for RNA or DNA synthesis. In Clostridium botulinum (strain Eklund 17B / Type B), this protein is Xanthine phosphoribosyltransferase.